We begin with the raw amino-acid sequence, 189 residues long: Streptothricin acetyltransferase (189 aa).

Residues 44 to 189 enclose the N-acetyltransferase domain; sequence FALREVPADP…HALYMSMPCP (146 aa). The tract at residues 55 to 76 is disordered; sequence LVKVFPDDGGSDGEDGAEGEDA. The span at 63–75 shows a compositional bias: acidic residues; it reads GGSDGEDGAEGED.

This sequence belongs to the acetyltransferase family. GNAT subfamily.

It carries out the reaction streptothricin F + acetyl-CoA = N(beta)-acetylstreptothricin F + CoA + H(+). In terms of biological role, involved in resistance to streptothricin, a broad-spectrum antibiotic produced by streptomycetes. Detoxifies streptothricin via acetylation of the beta amino group of the first beta-lysyl moiety of streptothricin. The chain is Streptothricin acetyltransferase from Streptomyces lavendulae.